The following is a 341-amino-acid chain: Tetraacyldisaccharide 4'-kinase (341 aa).

54–61 (TVGGTGKT) serves as a coordination point for ATP.

It belongs to the LpxK family.

It catalyses the reaction a lipid A disaccharide + ATP = a lipid IVA + ADP + H(+). Its pathway is glycolipid biosynthesis; lipid IV(A) biosynthesis; lipid IV(A) from (3R)-3-hydroxytetradecanoyl-[acyl-carrier-protein] and UDP-N-acetyl-alpha-D-glucosamine: step 6/6. Functionally, transfers the gamma-phosphate of ATP to the 4'-position of a tetraacyldisaccharide 1-phosphate intermediate (termed DS-1-P) to form tetraacyldisaccharide 1,4'-bis-phosphate (lipid IVA). This chain is Tetraacyldisaccharide 4'-kinase, found in Mesorhizobium japonicum (strain LMG 29417 / CECT 9101 / MAFF 303099) (Mesorhizobium loti (strain MAFF 303099)).